A 4080-amino-acid chain; its full sequence is Hybrid PKS-NRPS synthetase poxE (4080 aa).

A Ketosynthase family 3 (KS3) domain is found at 8 to 442 (REPIAIVGSG…GTNAHAIIEA (435 aa)). Catalysis depends on for beta-ketoacyl synthase activity residues cysteine 181, histidine 320, and histidine 362. Residues 554–878 (VFTGQGAQWA…QRGMNDVEAM (325 aa)) are malonyl-CoA:ACP transacylase (MAT) domain. Positions 944 to 1078 (HPILGTRCPD…GRLVITYGPV (135 aa)) are N-terminal hotdog fold. A PKS/mFAS DH domain is found at 944–1246 (HPILGTRCPD…AVPLEATNAD (303 aa)). The dehydratase (DH) domain stretch occupies residues 945–1243 (PILGTRCPDG…GIHAVPLEAT (299 aa)). Catalysis depends on histidine 976, which acts as the Proton acceptor; for dehydratase activity. A C-terminal hotdog fold region spans residues 1093-1246 (MVDVPSERFY…AVPLEATNAD (154 aa)). Aspartate 1152 functions as the Proton donor; for dehydratase activity in the catalytic mechanism. Positions 1400 to 1585 (HFSDYLASVV…GVDTFTSDAD (186 aa)) are methyltransferase (MT) domain. The tract at residues 2118–2292 (TYWLVGLTGS…AGSVMNIGAI (175 aa)) is ketoreductase (KR)domain. Positions 2399–2478 (TTDEIYEVIK…TIGEIIKFVL (80 aa)) are peptidyl carrier protein. One can recognise a Carrier 1 domain in the interval 2405–2481 (EVIKECFIVK…EIIKFVLEKL (77 aa)). Residue serine 2441 is modified to O-(pantetheine 4'-phosphoryl)serine. The interval 2488–2569 (SLGLSPPTGA…AASPSIHTEE (82 aa)) is disordered. Basic and acidic residues predominate over residues 2511-2525 (VVVERRNVPRLEKKI). A compositionally biased stretch (low complexity) spans 2528 to 2545 (SAGSRTSSSVTGTSKSVS). A compositionally biased stretch (polar residues) spans 2551–2565 (DTASSQTSEAASPSI). The segment at 2607–3036 (KEPLSFGQSR…DSKQPGGHVS (430 aa)) is condensation. Residues 3069–3478 (DMAKQYPQKL…DGRLRIEGRI (410 aa)) are adenylation. Residues 3593-3673 (AHLNEAQAQM…KMALLIKPQE (81 aa)) form the Carrier 2 domain. The thiolation stretch occupies residues 3598–3670 (AQAQMVQLWE…TLEKMALLIK (73 aa)). Serine 3633 bears the O-(pantetheine 4'-phosphoryl)serine mark. The reductase (RED) domain stretch occupies residues 3740 to 3959 (LTGATGFIGQ…DFVPVEQVVR (220 aa)).

In the C-terminal section; belongs to the NRP synthetase family.

The protein operates within secondary metabolite biosynthesis. Its function is as follows. Hybrid PKS-NRPS synthetase; part of the gene cluster that mediates the biosynthesis of oxaleimides, cytotoxic compounds containing an unusual disubstituted succinimide moiety. The first step of the pathway is provided by the HR-PKS poxF that serves in a new mode of collaborative biosynthesis with the PKS-NRPS poxE, by providing the olefin containing amino acid substrate via the synthesis of an ACP-bound dec-4-enoate. The cytochrome P450 monooxygenase poxM-catalyzed oxidation at the alpha-position creates the enzyme-bound 2-hydroxydec-4-enoyl-ACP thioester, which may be prone to spontaneous hydrolysis to yield 2-hydroxydec-4-enoic acid due to increased electrophilicity of the carbonyl. 2-hydroxydec-4-enoic acid can then be further oxidized by poxM to yield the alpha-ketoacid 2-oxodec-4-enoicacid, which is reductively aminated by the aminotransferase poxL to yield (S,E)-2-aminodec-4-enoic acid. The Hybrid PKS-NRPS synthetase poxE then performs condensation between the octaketide product of its PKS modules and the amino group of (S,E)-2-aminodec-4-enoic acid which is activated and incorporated by the adenylation domain. The resulting aminoacyl product can be cyclized by the Diels-Alderase PoxQ and reductively released by the reductive (R) domain of poxE to yield an aldehyde intermediate. The released aldehyde is then substrate for a Knoevenagel condensation by the hydrolyase poxO followed by an oxidation at the 5-position of the pyrrolidone ring. The presence of the olefin from the amino acid building block allows for migration of the substituted allyl group to occur. This allylic transposition reaction takes place in a conjugate addition, semipinacol-like fashion to yield a succinimide intermediate. Iterative two-electron oxidations of the C7 methyl of the succinimide intermediate to the carboxylic acid can be catalyzed by one of two remaining cytochrome P450 monooxygenasess poxC or poxD to yield oxaleimide A. Subsequent oxidation yields the maleimide scaffold oxaleimide I. Both oxaleimide A and oxaleimide I can undergo oxidative modifications in the decalin ring to yield the series of products oxaleimides B to H. This chain is Hybrid PKS-NRPS synthetase poxE, found in Penicillium oxalicum (strain 114-2 / CGMCC 5302) (Penicillium decumbens).